The sequence spans 232 residues: Sugar fermentation stimulation protein homolog (232 aa).

It belongs to the SfsA family.

This Brucella anthropi (strain ATCC 49188 / DSM 6882 / CCUG 24695 / JCM 21032 / LMG 3331 / NBRC 15819 / NCTC 12168 / Alc 37) (Ochrobactrum anthropi) protein is Sugar fermentation stimulation protein homolog.